The sequence spans 355 residues: Meiotic coiled-coil protein 4 (355 aa).

Positions Gln-298–Asn-338 form a coiled coil.

The protein resides in the cytoplasm. Has a role in meiosis. In Schizosaccharomyces pombe (strain 972 / ATCC 24843) (Fission yeast), this protein is Meiotic coiled-coil protein 4 (mcp4).